A 394-amino-acid polypeptide reads, in one-letter code: Tetracycline resistance protein, class D (394 aa).

12 helical membrane-spanning segments follow: residues 6 to 26 (VIAL…MPVL), 42 to 62 (HYGI…PLLG), 73 to 93 (VLLL…LSNV), 94 to 114 (LWML…GAVA), 135 to 155 (GAAF…AGDI), 159 to 179 (LPFV…FFIF), 198 to 218 (GISF…FFTA), 243 to 263 (AVGF…AVVA), 274 to 294 (TIIF…SAIT), 296 to 316 (GWMV…LPAL), 335 to 355 (VLVS…AFIF), and 364 to 384 (GTVW…CLLI).

This sequence belongs to the major facilitator superfamily. TCR/Tet family.

It is found in the cell inner membrane. Functionally, resistance to tetracycline by an active tetracycline efflux. This is an energy-dependent process that decreases the accumulation of the antibiotic in whole cells. This protein functions as a metal-tetracycline/H(+) antiporter. This Salmonella ordonez protein is Tetracycline resistance protein, class D (tetA).